The sequence spans 282 residues: NADPH-dependent 7-cyano-7-deazaguanine reductase (282 aa).

88-90 (IES) serves as a coordination point for substrate. 90 to 91 (SK) is a binding site for NADPH. Catalysis depends on Cys190, which acts as the Thioimide intermediate. Asp197 functions as the Proton donor in the catalytic mechanism. 229–230 (HE) is a binding site for substrate. An NADPH-binding site is contributed by 258-259 (RG).

This sequence belongs to the GTP cyclohydrolase I family. QueF type 2 subfamily. As to quaternary structure, homodimer.

It localises to the cytoplasm. The enzyme catalyses 7-aminomethyl-7-carbaguanine + 2 NADP(+) = 7-cyano-7-deazaguanine + 2 NADPH + 3 H(+). It participates in tRNA modification; tRNA-queuosine biosynthesis. Functionally, catalyzes the NADPH-dependent reduction of 7-cyano-7-deazaguanine (preQ0) to 7-aminomethyl-7-deazaguanine (preQ1). The chain is NADPH-dependent 7-cyano-7-deazaguanine reductase from Salmonella paratyphi B (strain ATCC BAA-1250 / SPB7).